We begin with the raw amino-acid sequence, 399 residues long: PCI domain-containing protein 2 (399 aa).

The PCI domain occupies 210 to 391 (VTFKYYVGRK…QKLVVSKQNP (182 aa)).

This sequence belongs to the CSN12 family.

In Xenopus laevis (African clawed frog), this protein is PCI domain-containing protein 2 (pcid2).